Reading from the N-terminus, the 215-residue chain is Extracellular small neutral protease (215 aa).

The N-terminal stretch at 1–30 (MRMTRAASALAGLGLAVAAALGSVAPASAA) is a signal peptide. Threonine 152 contacts Ca(2+). Histidine 157 lines the Zn(2+) pocket. Residue glutamate 158 is part of the active site. Residues histidine 161 and aspartate 167 each coordinate Zn(2+). A disulfide bridge connects residues cysteine 173 and cysteine 186.

This sequence belongs to the peptidase M7 family. Requires Zn(2+) as cofactor.

It is found in the secreted. The catalysed reaction is Hydrolyzes proteins with a preference for Tyr or Phe in the P1' position. Has no action on amino-acid p-nitroanilides.. This is Extracellular small neutral protease (snpA) from Streptomyces coelicolor.